Here is a 180-residue protein sequence, read N- to C-terminus: Shikimate kinase (180 aa).

14-19 (GAGKSS) contacts ATP. Serine 18 serves as a coordination point for Mg(2+). Substrate-binding residues include aspartate 36, arginine 60, and glycine 82. Position 120 (arginine 120) interacts with ATP. Arginine 139 lines the substrate pocket.

Belongs to the shikimate kinase family. In terms of assembly, monomer. Requires Mg(2+) as cofactor.

Its subcellular location is the cytoplasm. The catalysed reaction is shikimate + ATP = 3-phosphoshikimate + ADP + H(+). It participates in metabolic intermediate biosynthesis; chorismate biosynthesis; chorismate from D-erythrose 4-phosphate and phosphoenolpyruvate: step 5/7. Catalyzes the specific phosphorylation of the 3-hydroxyl group of shikimic acid using ATP as a cosubstrate. This Xylella fastidiosa (strain M23) protein is Shikimate kinase.